We begin with the raw amino-acid sequence, 391 residues long: MAINAGSSSLKFQLLNMPEEELVTKGVVERIGLGDGIFTIEVKGEKVTETFDIPDHAFAVKTLLEKLTSHEIIQSLDEIEGIGHRVVHGGEKFNDSVLITDEVIQGIEECNELAPLHNPANIVGIRAFKEVLPNVPAVAVFDTAFHQTMPESSFLYSLPYDYYKEFGIRKYGFHGTSHKYVSQRAAELLGRPIEQLRLLSCHLGNGASIAAIDGGKSIDTSMGFTPLAGVTMGTRSGNIDPALIPFIMEKTGQTANEVINTLNKKSGLLGVSGFSSDLRDIEEQAGEGNDRAELALEVFTSRIHKYIGSYAARMSGVDAIIFTAGIGENSTVIRERVLRGLEFMGVYWDPSLNQVRGKEAFINYPHSPVKVLVIPTNEEVMIARDTVRLAQ.

Mg(2+) is bound at residue Asn-4. Lys-11 serves as a coordination point for ATP. Arg-85 is a binding site for substrate. Asp-142 (proton donor/acceptor) is an active-site residue. ATP-binding positions include 202 to 206 (HLGNG), 277 to 279 (DLR), and 325 to 329 (GIGEN). Position 378 (Glu-378) interacts with Mg(2+).

This sequence belongs to the acetokinase family. In terms of assembly, homodimer. Mg(2+) is required as a cofactor. The cofactor is Mn(2+).

The protein resides in the cytoplasm. The enzyme catalyses acetate + ATP = acetyl phosphate + ADP. The protein operates within metabolic intermediate biosynthesis; acetyl-CoA biosynthesis; acetyl-CoA from acetate: step 1/2. Functionally, catalyzes the formation of acetyl phosphate from acetate and ATP. Can also catalyze the reverse reaction. The polypeptide is Acetate kinase (Halalkalibacterium halodurans (strain ATCC BAA-125 / DSM 18197 / FERM 7344 / JCM 9153 / C-125) (Bacillus halodurans)).